A 461-amino-acid polypeptide reads, in one-letter code: PTS system sucrose-specific EIIBC component (461 aa).

The PTS EIIB type-1 domain maps to 4–87; that stretch reads KETAKRLIEL…SKEADIEREE (84 aa). Cysteine 26 acts as the Phosphocysteine intermediate; for EIIB activity in catalysis. The PTS EIIC type-1 domain maps to 107–461; sequence KTLSNIFVPI…KINEDEERKK (355 aa). The next 10 membrane-spanning stretches (helical) occupy residues 112-132, 148-168, 178-198, 208-228, 248-268, 289-309, 329-349, 359-379, 387-407, and 430-450; these read IFVP…LLGM, LLDM…GVSA, LGAV…WGLA, FGFD…LLAV, LLVT…IAIG, AGFV…LTGV, LLPI…AVFF, IALP…IFGV, FIAA…THVA, and LIHY…AAFV.

The protein localises to the cell membrane. It carries out the reaction N(pros)-phospho-L-histidyl-[protein](out) + sucrose = sucrose 6(G)-phosphate(in) + L-histidyl-[protein]. The phosphoenolpyruvate-dependent sugar phosphotransferase system (sugar PTS), a major carbohydrate active transport system, catalyzes the phosphorylation of incoming sugar substrates concomitantly with their translocation across the cell membrane. This system is involved in sucrose transport. The chain is PTS system sucrose-specific EIIBC component (sacP) from Bacillus subtilis (strain 168).